The sequence spans 346 residues: D-erythrose-4-phosphate dehydrogenase (346 aa).

NAD(+) is bound at residue R11 to I12. Residues S163–T165, R209, T222–K223, and R245 each bind substrate. C164 functions as the Nucleophile in the catalytic mechanism. N327 is an NAD(+) binding site.

This sequence belongs to the glyceraldehyde-3-phosphate dehydrogenase family. Epd subfamily. Homotetramer.

It is found in the cytoplasm. It carries out the reaction D-erythrose 4-phosphate + NAD(+) + H2O = 4-phospho-D-erythronate + NADH + 2 H(+). The protein operates within cofactor biosynthesis; pyridoxine 5'-phosphate biosynthesis; pyridoxine 5'-phosphate from D-erythrose 4-phosphate: step 1/5. Its function is as follows. Catalyzes the NAD-dependent conversion of D-erythrose 4-phosphate to 4-phosphoerythronate. This Vibrio vulnificus (strain CMCP6) protein is D-erythrose-4-phosphate dehydrogenase.